Reading from the N-terminus, the 124-residue chain is Small ribosomal subunit protein uS13 (124 aa).

A compositionally biased stretch (basic residues) spans 92–117; that stretch reads RRGLPVRGQRTKSNARTRKGPRKTVA. The interval 92 to 124 is disordered; sequence RRGLPVRGQRTKSNARTRKGPRKTVANKKIESK.

Belongs to the universal ribosomal protein uS13 family. As to quaternary structure, part of the 30S ribosomal subunit. Forms a loose heterodimer with protein S19. Forms two bridges to the 50S subunit in the 70S ribosome.

Functionally, located at the top of the head of the 30S subunit, it contacts several helices of the 16S rRNA. In the 70S ribosome it contacts the 23S rRNA (bridge B1a) and protein L5 of the 50S subunit (bridge B1b), connecting the 2 subunits; these bridges are implicated in subunit movement. Contacts the tRNAs in the A and P-sites. The polypeptide is Small ribosomal subunit protein uS13 (Mycoplasmoides gallisepticum (strain R(low / passage 15 / clone 2)) (Mycoplasma gallisepticum)).